We begin with the raw amino-acid sequence, 312 residues long: Homoserine O-acetyltransferase (312 aa).

Cys142 serves as the catalytic Acyl-thioester intermediate. Substrate contacts are provided by Lys163 and Ser194. The active-site Proton acceptor is the His237. Glu239 is an active-site residue. Arg251 provides a ligand contact to substrate.

Belongs to the MetA family.

It is found in the cytoplasm. It catalyses the reaction L-homoserine + acetyl-CoA = O-acetyl-L-homoserine + CoA. The protein operates within amino-acid biosynthesis; L-methionine biosynthesis via de novo pathway; O-acetyl-L-homoserine from L-homoserine: step 1/1. Its function is as follows. Transfers an acetyl group from acetyl-CoA to L-homoserine, forming acetyl-L-homoserine. This is Homoserine O-acetyltransferase from Catenibacterium mitsuokai (strain DSM 15897 / JCM 10609 / CCUG 48821 A / CIP 106738 / RCA14-39).